Here is a 928-residue protein sequence, read N- to C-terminus: DNA polymerase I (928 aa).

The 5'-3' exonuclease domain occupies 1–323; the sequence is MVQIPQNPLI…ADEAPEVTAT (323 aa). A 3'-5' exonuclease domain is found at 324-517; sequence VISYDNYVTI…LHLKMWPDLQ (194 aa). The tract at residues 324-928 is klenow fragment; that stretch reads VISYDNYVTI…GSGENWDQAH (605 aa). Residues 521–928 are polymerase; it reads GPLNVFENIE…GSGENWDQAH (408 aa).

Belongs to the DNA polymerase type-A family. In terms of assembly, single-chain monomer with multiple functions.

It catalyses the reaction DNA(n) + a 2'-deoxyribonucleoside 5'-triphosphate = DNA(n+1) + diphosphate. Its function is as follows. In addition to polymerase activity, this DNA polymerase exhibits 3'-5' and 5'-3' exonuclease activity. It is able to utilize nicked circular duplex DNA as a template and can unwind the parental DNA strand from its template. Functionally, genetic interactions among priB, dam, lexA, nagC, polA, rdgB, rdgB, rep and uup link the PriA-PriB replication restart pathway to DNA double-strand break repair. This is DNA polymerase I (polA) from Escherichia coli (strain K12).